Reading from the N-terminus, the 197-residue chain is MLERIKDSFTHSIQTKIDAAEALPESIEKAAEMMVQCLLGGNKILACGNGGSAGDAQHFSAELLNRYEIERPPLPAIALTTDTSTITAIGNDYSYDEIFSKQILALGQPGDILLAISTSGNSGNVIKAMEAALSRDMTIVALTGKDGGAMAGLMGTNDVEVRVPSNVTARIQEVHLLVIHCLCDNIDRTLFPQDDQA.

In terms of domain architecture, SIS spans 34-196 (MVQCLLGGNK…DRTLFPQDDQ (163 aa)). 49–51 (NGG) contributes to the substrate binding site. Zn(2+) is bound by residues H58 and E62. Residues E62, 91-92 (ND), 117-119 (STS), S122, and Q172 contribute to the substrate site. Residues Q172 and H180 each coordinate Zn(2+).

Belongs to the SIS family. GmhA subfamily. In terms of assembly, homotetramer. Zn(2+) serves as cofactor.

The protein resides in the cytoplasm. The enzyme catalyses 2 D-sedoheptulose 7-phosphate = D-glycero-alpha-D-manno-heptose 7-phosphate + D-glycero-beta-D-manno-heptose 7-phosphate. Its pathway is carbohydrate biosynthesis; D-glycero-D-manno-heptose 7-phosphate biosynthesis; D-glycero-alpha-D-manno-heptose 7-phosphate and D-glycero-beta-D-manno-heptose 7-phosphate from sedoheptulose 7-phosphate: step 1/1. Its function is as follows. Catalyzes the isomerization of sedoheptulose 7-phosphate in D-glycero-D-manno-heptose 7-phosphate. The protein is Phosphoheptose isomerase of Shewanella loihica (strain ATCC BAA-1088 / PV-4).